We begin with the raw amino-acid sequence, 336 residues long: 4-hydroxy-3-methylbut-2-enyl diphosphate reductase (336 aa).

Cys-37 provides a ligand contact to [4Fe-4S] cluster. 2 residues coordinate (2E)-4-hydroxy-3-methylbut-2-enyl diphosphate: His-66 and His-99. 2 residues coordinate dimethylallyl diphosphate: His-66 and His-99. Isopentenyl diphosphate contacts are provided by His-66 and His-99. Cys-121 lines the [4Fe-4S] cluster pocket. His-149 provides a ligand contact to (2E)-4-hydroxy-3-methylbut-2-enyl diphosphate. His-149 serves as a coordination point for dimethylallyl diphosphate. His-149 provides a ligand contact to isopentenyl diphosphate. The Proton donor role is filled by Glu-151. Thr-189 serves as a coordination point for (2E)-4-hydroxy-3-methylbut-2-enyl diphosphate. Cys-219 serves as a coordination point for [4Fe-4S] cluster. Positions 247, 248, 249, and 292 each coordinate (2E)-4-hydroxy-3-methylbut-2-enyl diphosphate. Dimethylallyl diphosphate-binding residues include Ser-247, Ser-248, Asn-249, and Ser-292. 4 residues coordinate isopentenyl diphosphate: Ser-247, Ser-248, Asn-249, and Ser-292.

It belongs to the IspH family. Requires [4Fe-4S] cluster as cofactor.

It carries out the reaction isopentenyl diphosphate + 2 oxidized [2Fe-2S]-[ferredoxin] + H2O = (2E)-4-hydroxy-3-methylbut-2-enyl diphosphate + 2 reduced [2Fe-2S]-[ferredoxin] + 2 H(+). The catalysed reaction is dimethylallyl diphosphate + 2 oxidized [2Fe-2S]-[ferredoxin] + H2O = (2E)-4-hydroxy-3-methylbut-2-enyl diphosphate + 2 reduced [2Fe-2S]-[ferredoxin] + 2 H(+). Its pathway is isoprenoid biosynthesis; dimethylallyl diphosphate biosynthesis; dimethylallyl diphosphate from (2E)-4-hydroxy-3-methylbutenyl diphosphate: step 1/1. It functions in the pathway isoprenoid biosynthesis; isopentenyl diphosphate biosynthesis via DXP pathway; isopentenyl diphosphate from 1-deoxy-D-xylulose 5-phosphate: step 6/6. Its function is as follows. Catalyzes the conversion of 1-hydroxy-2-methyl-2-(E)-butenyl 4-diphosphate (HMBPP) into a mixture of isopentenyl diphosphate (IPP) and dimethylallyl diphosphate (DMAPP). Acts in the terminal step of the DOXP/MEP pathway for isoprenoid precursor biosynthesis. The protein is 4-hydroxy-3-methylbut-2-enyl diphosphate reductase of Rhodococcus jostii (strain RHA1).